The primary structure comprises 924 residues: Aminopeptidase 2 (924 aa).

Positions 1–45 (MASNNTSQRSGFSSFFCRLKTYFCNHFLCLFVLSFFPLSFRRLCL) are cleaved as a signal peptide. Positions 46-57 (LCHLCEKSNLWL) are excised as a propeptide. S58 is modified (N-acetylserine; partial). An N-linked (GlcNAc...) asparagine glycan is attached at N92. E194 lines the substrate pocket. The N-linked (GlcNAc...) asparagine glycan is linked to N229. Residue 327–331 (GAMEN) coordinates substrate. Residue H363 participates in Zn(2+) binding. Catalysis depends on E364, which acts as the Proton acceptor. Zn(2+)-binding residues include H367 and E386.

Belongs to the peptidase M1 family. It depends on Zn(2+) as a cofactor.

Its subcellular location is the secreted. It localises to the cell wall. Its activity is regulated as follows. Inactivated by metal-chelating agents phenanthroline and EDTA. Inhibited by bestatin, an aminopeptidase inhibitor. Not inhibited by pepstatin A and PMSF, inhibitors of aspartic and the serine proteases, respectively. Not inhibited by carboxypeptidase inhibitor. In terms of biological role, metalloprotease that specifically hydrolyzes peptides with N-terminal alanine, arginine and leucine residues. In Candida albicans (strain SC5314 / ATCC MYA-2876) (Yeast), this protein is Aminopeptidase 2 (APE2).